A 669-amino-acid polypeptide reads, in one-letter code: Very long-chain fatty acid transport protein (669 aa).

At 1–5 (MSPIQ) the chain is on the cytoplasmic side. Residues 6–26 (VVVFALSRIFLLLFRLIKLII) form a helical membrane-spanning segment. The Extracellular portion of the chain corresponds to 27–148 (TPIQKSLGYL…YVAIDCTNKP (122 aa)). The helical transmembrane segment at 149 to 169 (LFVFLWLSLWNIGAIPAFLNY) threads the bilayer. Topologically, residues 170–270 (NTKGTPLVHS…TGLPKSAIMS (101 aa)) are cytoplasmic. ATP is bound at residue 256–267 (YTSGTTGLPKSA). An intramembrane segment occupies 271-339 (WRKSSVGCQV…FWKQVYLTGA (69 aa)). At 340–669 (THIQYVGEVC…EAIDAQTIKL (330 aa)) the chain is on the cytoplasmic side. An FACS motif is present at residues 501-551 (DAWYRCGDLLKADEYGLWYFLDRMGDTFRWKSENVSTTEVEDQLTASNKEQ). A C-terminal peroxisome targeting signal (PTS1) motif is present at residues 667–669 (IKL).

It belongs to the ATP-dependent AMP-binding enzyme family. Interacts with fatty acyl-CoA synthetases FAA1 and FAA4.

It localises to the lipid droplet. The protein localises to the cell membrane. It is found in the peroxisome membrane. The protein resides in the peroxisome. The catalysed reaction is a very long-chain fatty acid + ATP + CoA = a very long-chain fatty acyl-CoA + AMP + diphosphate. The enzyme catalyses tetracosanoate + ATP + CoA = tetracosanoyl-CoA + AMP + diphosphate. Functionally, acyl-CoA synthetase required for both the import of long chain fatty acids (LCFAs) (C14-C18) and the activation very long chain fatty acids (VLCFAs) (C20-C26) by esterification of the fatty acids into metabolically active CoA-thioesters for subsequent degradation or incorporation into phospholipids. The transport and fatty acyl-CoA synthetase activities are genetically separable and are thus independent activities. Esterifies VLCFAs in the peroxisome matrix. The VLCFAs are actively transported into peroxisomes by a PXA1-PXA2 heterodimeric transporter in the peroxisomal membrane. The polypeptide is Very long-chain fatty acid transport protein (FAT1) (Saccharomyces cerevisiae (strain ATCC 204508 / S288c) (Baker's yeast)).